The primary structure comprises 391 residues: Phosphoglycerate kinase (391 aa).

Substrate-binding positions include 21–23, Arg-36, 59–62, Arg-113, and Arg-146; these read DLN and HLGR. Residues Lys-197, Glu-319, and 345-348 contribute to the ATP site; that span reads GGDT.

This sequence belongs to the phosphoglycerate kinase family. Monomer.

It localises to the cytoplasm. The catalysed reaction is (2R)-3-phosphoglycerate + ATP = (2R)-3-phospho-glyceroyl phosphate + ADP. It participates in carbohydrate degradation; glycolysis; pyruvate from D-glyceraldehyde 3-phosphate: step 2/5. In Xylella fastidiosa (strain 9a5c), this protein is Phosphoglycerate kinase.